A 414-amino-acid polypeptide reads, in one-letter code: Meiotic driver wtf19 (414 aa).

Residues 1-94 (MKNKYYPVRT…RENHSSGTAD (94 aa)) are disordered. The segment covering 11-29 (SMDEMNAKNDNEIDLEKGP) has biased composition (basic and acidic residues). Over residues 57-72 (GANNPNLFNTDESTTP) the composition is skewed to polar residues. 9 helical membrane-spanning segments follow: residues 99–119 (FLIK…PAVC), 136–156 (WVYF…LWCF), 170–190 (VTVI…AQCV), 192–212 (VTAI…AQCV), 222–242 (CVKV…IGLF), 247–267 (EMMI…FGCV), 284–304 (TISA…WTLW), 311–331 (LQVL…MSLF), and 339–359 (GYEI…LYEM).

This sequence belongs to the WTF family. In terms of assembly, homomer. Forms protein aggregates. The two isoforms can interact with each other and with themselves. High sequence similarity is required for their interaction.

It localises to the spore membrane. The protein localises to the vacuole membrane. Its subcellular location is the ascus epiplasm. It is found in the cytoplasm. The protein resides in the endoplasmic reticulum membrane. In terms of biological role, promotes unequal transmission of alleles from the parental zygote to progeny spores by acting as poison/antidote system where the poison and antidote proteins are produced from the same locus; the poison component is trans-acting and targets all spores within an ascus whereas the antidote component is spore-specific, leading to poisoning of all progeny that do not inherit the allele. Localizes isoform 2 to the vacuole thereby facilitating its degradation. Its function is as follows. Forms toxic aggregates that disrupt spore maturation. The sequence is that of Meiotic driver wtf19 from Schizosaccharomyces kambucha (Fission yeast).